The following is a 105-amino-acid chain: Antithrombin-III (105 aa).

Residues 1–17 form the signal peptide; sequence MHLFIGVSLRPLGHGIP. A disordered region spans residues 38–105; sequence ICIYRNPEKK…MRRTSSCRPS (68 aa). Over residues 43–53 the composition is skewed to basic and acidic residues; that stretch reads NPEKKPQERRG.

This sequence belongs to the serpin family. Forms protease inhibiting heterodimer with TMPRSS7. As to expression, plasma.

The protein resides in the secreted. It is found in the extracellular space. In terms of biological role, most important serine protease inhibitor in plasma that regulates the blood coagulation cascade. AT-III inhibits thrombin, matriptase-3/TMPRSS7, as well as factors IXa, Xa and XIa. Its inhibitory activity is greatly enhanced in the presence of heparin. The protein is Antithrombin-III (SERPINC1) of Gallus gallus (Chicken).